The following is an 89-amino-acid chain: Small ribosomal subunit protein uS15 (89 aa).

The segment at 1–22 is disordered; the sequence is MPLSKEQKQEVMEKYKLHEHDT.

It belongs to the universal ribosomal protein uS15 family. As to quaternary structure, part of the 30S ribosomal subunit. Forms a bridge to the 50S subunit in the 70S ribosome, contacting the 23S rRNA.

In terms of biological role, one of the primary rRNA binding proteins, it binds directly to 16S rRNA where it helps nucleate assembly of the platform of the 30S subunit by binding and bridging several RNA helices of the 16S rRNA. Functionally, forms an intersubunit bridge (bridge B4) with the 23S rRNA of the 50S subunit in the ribosome. This chain is Small ribosomal subunit protein uS15, found in Natranaerobius thermophilus (strain ATCC BAA-1301 / DSM 18059 / JW/NM-WN-LF).